Here is a 243-residue protein sequence, read N- to C-terminus: High affinity immunoglobulin epsilon receptor subunit beta (243 aa).

A disordered region spans residues 1 to 48 (MDTENKSRADLALPNPQESPSAPDIELLEASPPAKALPEKPASPPPQQ). Residues 1–59 (MDTENKSRADLALPNPQESPSAPDIELLEASPPAKALPEKPASPPPQQTWQSFLKKELE) lie on the Cytoplasmic side of the membrane. The chain crosses the membrane as a helical span at residues 60–79 (FLGVTQVLVGLICLCFGTVV). The Extracellular segment spans residues 80–97 (CSTLQTSDFDDEVLLLYR). The chain crosses the membrane as a helical span at residues 98 to 117 (AGYPFWGAVLFVLSGFLSIM). Residues 118–130 (SERKNTLYLVRGS) are Cytoplasmic-facing. The chain crosses the membrane as a helical span at residues 131–150 (LGANIVSSIAAGLGIAILIL). Residues 151-179 (NLSNNSAYMNYCKDITEDDGCFVTSFITE) lie on the Extracellular side of the membrane. The chain crosses the membrane as a helical span at residues 180-199 (LVLMLLFLTILAFCSAVLLI). The Cytoplasmic segment spans residues 200 to 243 (IYRIGQEFERSKVPDDRLYEELHVYSPIYSALEDTREASAPVVS). Phosphotyrosine occurs at positions 218 and 224. The residue at position 225 (S225) is a Phosphoserine. The residue at position 228 (Y228) is a Phosphotyrosine.

It belongs to the MS4A family. Tetramer of an alpha chain, a beta chain, and two disulfide linked gamma chains. Binds LILRB1. Interacts with FES/FPS and LYN. Interacts with FGR. In terms of processing, phosphorylated on tyrosine residues by LYN.

It localises to the membrane. High affinity receptor that binds to the Fc region of immunoglobulins epsilon. Aggregation of FCER1 by multivalent antigens is required for the full mast cell response, including the release of preformed mediators (such as histamine) by degranulation and de novo production of lipid mediators and cytokines. Also mediates the secretion of important lymphokines. Binding of allergen to receptor-bound IgE leads to cell activation and the release of mediators responsible for the manifestations of allergy. This is High affinity immunoglobulin epsilon receptor subunit beta (Ms4a2) from Rattus norvegicus (Rat).